The following is a 364-amino-acid chain: Ribosomal RNA large subunit methyltransferase M (364 aa).

Residues serine 187, 220 to 223 (CPGG), aspartate 239, aspartate 259, and aspartate 276 contribute to the S-adenosyl-L-methionine site. Lysine 305 (proton acceptor) is an active-site residue.

This sequence belongs to the class I-like SAM-binding methyltransferase superfamily. RNA methyltransferase RlmE family. RlmM subfamily. As to quaternary structure, monomer.

It localises to the cytoplasm. It catalyses the reaction cytidine(2498) in 23S rRNA + S-adenosyl-L-methionine = 2'-O-methylcytidine(2498) in 23S rRNA + S-adenosyl-L-homocysteine + H(+). In terms of biological role, catalyzes the 2'-O-methylation at nucleotide C2498 in 23S rRNA. This is Ribosomal RNA large subunit methyltransferase M from Aeromonas salmonicida (strain A449).